The sequence spans 540 residues: Beta-secretase (540 aa).

A signal peptide spans 1-31; it reads MHFSLPTSRIVVVVPAAAICIVCVLIETCTA. The Peptidase A1 domain occupies 81-435; the sequence is YYIEVDIGTP…DRENKRVGFA (355 aa). Active-site residues include D99 and D302. Disulfide bonds link C222/C439, C291/C469, and C345/C397. The chain crosses the membrane as a helical span at residues 483-503; the sequence is ITAYVLAAICLVCLIPVIVFA. The Cytoplasmic portion of the chain corresponds to 504-540; the sequence is LTHQINKRCKGRRGRGVVNHHRLDQEGLAENEPNSDP.

This sequence belongs to the peptidase A1 family.

The protein localises to the membrane. The protein is Beta-secretase of Strongylocentrotus purpuratus (Purple sea urchin).